We begin with the raw amino-acid sequence, 759 residues long: 1,4-alpha-glucan branching enzyme GlgB (759 aa).

The interval 1–21 (MAKTKGLPKDTAVTPSPHLRP) is disordered. The Nucleophile role is filled by aspartate 422. Glutamate 475 acts as the Proton donor in catalysis.

The protein belongs to the glycosyl hydrolase 13 family. GlgB subfamily. Monomer.

The enzyme catalyses Transfers a segment of a (1-&gt;4)-alpha-D-glucan chain to a primary hydroxy group in a similar glucan chain.. It participates in glycan biosynthesis; glycogen biosynthesis. Functionally, catalyzes the formation of the alpha-1,6-glucosidic linkages in glycogen by scission of a 1,4-alpha-linked oligosaccharide from growing alpha-1,4-glucan chains and the subsequent attachment of the oligosaccharide to the alpha-1,6 position. This is 1,4-alpha-glucan branching enzyme GlgB from Mycobacterium sp. (strain JLS).